The primary structure comprises 286 residues: Probable syntaxin-7B (286 aa).

The Cytoplasmic portion of the chain corresponds to 1-257 (MTDRQPLISK…YVYKSSYRKK (257 aa)). Positions 97–107 (LSTSNKKESSH) are enriched in basic and acidic residues. The tract at residues 97-160 (LSTSNKKESS…TNNNNNNNNN (64 aa)) is disordered. Over residues 114 to 160 (QQQQQQQNNGNSNNNGYNTRGGYNQQQQQQQQQYNDYTNNNNNNNNN) the composition is skewed to low complexity. The region spanning 185–247 (NRILDERNAN…EDAVVELEKA (63 aa)) is the t-SNARE coiled-coil homology domain. A helical; Anchor for type IV membrane protein transmembrane segment spans residues 258-278 (MIIFVICLLVTLVAVGIFLAI). Residues 279–286 (YYGVIKKK) are Vesicular-facing.

It belongs to the syntaxin family.

The protein resides in the membrane. This Dictyostelium discoideum (Social amoeba) protein is Probable syntaxin-7B (syn7B).